The primary structure comprises 472 residues: Eukaryotic translation initiation factor 2 subunit 3B (472 aa).

Ala2 carries the N-acetylalanine modification. Phosphoserine is present on Ser16. The region spanning 39–248 (QATINIGTIG…IVKKIPVPPR (210 aa)) is the tr-type G domain. Residues 48-55 (GHVAHGKS) form a G1 region. 51–56 (AHGKST) provides a ligand contact to GTP. Residues 76 to 80 (NITIK) form a G2 region. Residues 134–137 (DCPG) are G3. GTP is bound by residues 190 to 193 (NKID) and 225 to 227 (SAQ). Residues 190 to 193 (NKID) are G4. Residues 225-227 (SAQ) are G5.

The protein belongs to the TRAFAC class translation factor GTPase superfamily. Classic translation factor GTPase family. EIF2G subfamily. As to quaternary structure, eIF2 is a heterotrimer composed of an alpha, a beta and a gamma chain. eIF2 is member of the 43S pre-initiation complex (43S PIC). In terms of tissue distribution, specifically expressed in testis at the mRNA level.

It catalyses the reaction GTP + H2O = GDP + phosphate + H(+). Functionally, member of the eIF2 complex that functions in the early steps of protein synthesis by forming a ternary complex with GTP and initiator tRNA. This complex binds to a 40S ribosomal subunit, followed by mRNA binding to form the 43S pre-initiation complex (43S PIC). Junction of the 60S ribosomal subunit to form the 80S initiation complex is preceded by hydrolysis of the GTP bound to eIF2 and release of an eIF2-GDP binary complex. In order for eIF2 to recycle and catalyze another round of initiation, the GDP bound to eIF2 must exchange with GTP by way of a reaction catalyzed by eIF-2B. This chain is Eukaryotic translation initiation factor 2 subunit 3B, found in Homo sapiens (Human).